Reading from the N-terminus, the 312-residue chain is Malate dehydrogenase (312 aa).

Residues Gly-7–Gly-13 and Asp-34 contribute to the NAD(+) site. Substrate contacts are provided by Arg-81 and Arg-87. NAD(+) contacts are provided by residues Asn-94 and Ile-117–Asn-119. 2 residues coordinate substrate: Asn-119 and Arg-153. His-177 serves as the catalytic Proton acceptor. Met-227 contributes to the NAD(+) binding site.

This sequence belongs to the LDH/MDH superfamily. MDH type 1 family. In terms of assembly, homodimer.

It carries out the reaction (S)-malate + NAD(+) = oxaloacetate + NADH + H(+). In terms of biological role, catalyzes the reversible oxidation of malate to oxaloacetate. This chain is Malate dehydrogenase, found in Photobacterium profundum (strain SS9).